A 78-amino-acid chain; its full sequence is Omega-conotoxin-like 12 (78 aa).

The first 22 residues, 1 to 22, serve as a signal peptide directing secretion; the sequence is MKLTCVVIVAVLLLTACQLITA. Residues 23–42 constitute a propeptide that is removed on maturation; the sequence is DDSRGTQKHRSLRSTTKVSK. Disulfide bonds link C46/C62, C53/C65, and C61/C72.

The protein belongs to the conotoxin O1 superfamily. In terms of tissue distribution, expressed by the venom duct.

The protein localises to the secreted. In terms of biological role, omega-conotoxins act at presynaptic membranes, they bind and block voltage-gated calcium channels (Cav). This chain is Omega-conotoxin-like 12, found in Conus striatus (Striated cone).